The sequence spans 709 residues: Phosphoribosylformylglycinamidine synthase subunit PurL (709 aa).

The active site involves H36. Positions 39 and 80 each coordinate ATP. Mg(2+) is bound at residue E82. Substrate-binding positions include 83–86 and R105; that span reads SHNH. The active-site Proton acceptor is H84. D106 provides a ligand contact to Mg(2+). Q226 provides a ligand contact to substrate. Residue D252 participates in Mg(2+) binding. 294-296 is a binding site for substrate; it reads ETQ. 2 residues coordinate ATP: D470 and G507. S510 contributes to the substrate binding site.

The protein belongs to the FGAMS family. As to quaternary structure, monomer. Part of the FGAM synthase complex composed of 1 PurL, 1 PurQ and 2 PurS subunits.

The protein resides in the cytoplasm. It carries out the reaction N(2)-formyl-N(1)-(5-phospho-beta-D-ribosyl)glycinamide + L-glutamine + ATP + H2O = 2-formamido-N(1)-(5-O-phospho-beta-D-ribosyl)acetamidine + L-glutamate + ADP + phosphate + H(+). Its pathway is purine metabolism; IMP biosynthesis via de novo pathway; 5-amino-1-(5-phospho-D-ribosyl)imidazole from N(2)-formyl-N(1)-(5-phospho-D-ribosyl)glycinamide: step 1/2. Functionally, part of the phosphoribosylformylglycinamidine synthase complex involved in the purines biosynthetic pathway. Catalyzes the ATP-dependent conversion of formylglycinamide ribonucleotide (FGAR) and glutamine to yield formylglycinamidine ribonucleotide (FGAM) and glutamate. The FGAM synthase complex is composed of three subunits. PurQ produces an ammonia molecule by converting glutamine to glutamate. PurL transfers the ammonia molecule to FGAR to form FGAM in an ATP-dependent manner. PurS interacts with PurQ and PurL and is thought to assist in the transfer of the ammonia molecule from PurQ to PurL. This chain is Phosphoribosylformylglycinamidine synthase subunit PurL, found in Saccharolobus islandicus (strain Y.N.15.51 / Yellowstone #2) (Sulfolobus islandicus).